The sequence spans 887 residues: Alanine--tRNA ligase (887 aa).

Residues His575, His579, Cys677, and His681 each coordinate Zn(2+).

It belongs to the class-II aminoacyl-tRNA synthetase family. Zn(2+) is required as a cofactor.

It is found in the cytoplasm. The enzyme catalyses tRNA(Ala) + L-alanine + ATP = L-alanyl-tRNA(Ala) + AMP + diphosphate. Its function is as follows. Catalyzes the attachment of alanine to tRNA(Ala) in a two-step reaction: alanine is first activated by ATP to form Ala-AMP and then transferred to the acceptor end of tRNA(Ala). Also edits incorrectly charged Ser-tRNA(Ala) and Gly-tRNA(Ala) via its editing domain. The polypeptide is Alanine--tRNA ligase (Geobacillus kaustophilus (strain HTA426)).